We begin with the raw amino-acid sequence, 36 residues long: Photosystem I reaction center subunit VIII (36 aa).

The chain crosses the membrane as a helical span at residues 6–28 (LPSIFVPLIGLFFPAIAMASLFL).

It belongs to the PsaI family.

The protein localises to the plastid. Its subcellular location is the chloroplast thylakoid membrane. Functionally, may help in the organization of the PsaL subunit. The polypeptide is Photosystem I reaction center subunit VIII (Amborella trichopoda).